Consider the following 290-residue polypeptide: Probable porphobilinogen deaminase (290 aa).

Cys230 carries the S-(dipyrrolylmethanemethyl)cysteine modification.

Belongs to the HMBS family. Dipyrromethane serves as cofactor.

It catalyses the reaction 4 porphobilinogen + H2O = hydroxymethylbilane + 4 NH4(+). It participates in porphyrin-containing compound metabolism; protoporphyrin-IX biosynthesis; coproporphyrinogen-III from 5-aminolevulinate: step 2/4. Tetrapolymerization of the monopyrrole PBG into the hydroxymethylbilane pre-uroporphyrinogen in several discrete steps. This Metallosphaera sedula (strain ATCC 51363 / DSM 5348 / JCM 9185 / NBRC 15509 / TH2) protein is Probable porphobilinogen deaminase.